We begin with the raw amino-acid sequence, 457 residues long: Aromatic amino acid transport protein AroP (457 aa).

The Cytoplasmic segment spans residues 1-19; that stretch reads MMEGQQHGEQLKRGLKNRH. The chain crosses the membrane as a helical span at residues 20 to 40; it reads IQLIALGGAIGTGLFLGSASV. The Periplasmic segment spans residues 41 to 42; the sequence is IQ. Residues 43–63 form a helical membrane-spanning segment; that stretch reads SAGPGIILGYAIAGFIAFLIM. The Cytoplasmic portion of the chain corresponds to 64-86; that stretch reads RQLGEMVVEEPVAGSFSHFAYKY. A helical transmembrane segment spans residues 87 to 107; the sequence is WGSFAGFASGWNYWVLYVLVA. Residues 108–117 are Periplasmic-facing; it reads MAELTAVGKY. Residues 118–138 traverse the membrane as a helical segment; it reads IQFWYPEIPTWVSAAVFFVVI. Residues 139–155 are Cytoplasmic-facing; it reads NAINLTNVKVFGEMEFW. A helical membrane pass occupies residues 156 to 176; the sequence is FAIIKVIAVVAMIIFGGWLLF. The Periplasmic portion of the chain corresponds to 177 to 201; that stretch reads SGNGGPQASVSNLWDQGGFLPHGFT. Residues 202–222 traverse the membrane as a helical segment; sequence GLVMMMAIIMFSFGGLELVGI. At 223 to 240 the chain is on the cytoplasmic side; that stretch reads TAAEADNPEQSIPKATNQ. The chain crosses the membrane as a helical span at residues 241–261; that stretch reads VIYRILIFYIGSLAVLLSLMP. The Periplasmic portion of the chain corresponds to 262 to 271; that stretch reads WTRVTADTSP. Residues 272–292 form a helical membrane-spanning segment; it reads FVLIFHELGDTFVANALNIVV. Over 293–333 the chain is Cytoplasmic; it reads LTAALSVYNSCVYCNSRMLFGLAQQGNAPKALASVDKRGVP. A helical transmembrane segment spans residues 334-354; it reads VNTILVSALVTALCVLINYLA. Over 355–358 the chain is Periplasmic; it reads PESA. The helical transmembrane segment at 359–379 threads the bilayer; sequence FGLLMALVVSALVINWAMISL. Topologically, residues 380–399 are cytoplasmic; sequence AHMKFRRAKQEQGVVTRFPA. The helical transmembrane segment at 400 to 420 threads the bilayer; it reads LLYPLGNWICLLFMAAVLVIM. Residues 421 to 425 are Periplasmic-facing; that stretch reads LMTPG. Residues 426–446 traverse the membrane as a helical segment; that stretch reads MAISVYLIPVWLIVLGIGYLF. At 447–457 the chain is on the cytoplasmic side; the sequence is KEKTAKAVKAH.

Belongs to the amino acid-polyamine-organocation (APC) superfamily. Amino acid transporter (AAT) (TC 2.A.3.1) family.

The protein localises to the cell inner membrane. It carries out the reaction L-phenylalanine(in) + H(+)(in) = L-phenylalanine(out) + H(+)(out). The enzyme catalyses L-tryptophan(in) + H(+)(in) = L-tryptophan(out) + H(+)(out). It catalyses the reaction L-tyrosine(in) + H(+)(in) = L-tyrosine(out) + H(+)(out). Functionally, permease that is involved in the active transport across the cytoplasmic membrane of all three aromatic amino acids, phenylalanine, tyrosine and tryptophan. This Shigella flexneri protein is Aromatic amino acid transport protein AroP (aroP).